A 405-amino-acid chain; its full sequence is F-box/kelch-repeat protein At2g43445 (405 aa).

In terms of domain architecture, F-box spans 7 to 53 (NTNSIYIVSELLEEIFLGLPLKSILKFKTVSKQWRSILESNLFVERR). Kelch repeat units follow at residues 146–197 (RDKV…CVNG) and 356–400 (THHD…VVGY).

This Arabidopsis thaliana (Mouse-ear cress) protein is F-box/kelch-repeat protein At2g43445.